A 358-amino-acid polypeptide reads, in one-letter code: Protein RecA (358 aa).

67 to 74 (GPESSGKT) is a binding site for ATP.

Belongs to the RecA family.

It is found in the cytoplasm. Can catalyze the hydrolysis of ATP in the presence of single-stranded DNA, the ATP-dependent uptake of single-stranded DNA by duplex DNA, and the ATP-dependent hybridization of homologous single-stranded DNAs. It interacts with LexA causing its activation and leading to its autocatalytic cleavage. The protein is Protein RecA of Xenorhabdus nematophila (strain ATCC 19061 / DSM 3370 / CCUG 14189 / LMG 1036 / NCIMB 9965 / AN6).